A 372-amino-acid chain; its full sequence is G patch domain and ankyrin repeat-containing protein 1 (372 aa).

Positions 74 to 110 (DSSSSKPQRAEPMRERKKKRRRVTREPAAAGVPRQGR) are disordered. ANK repeat units lie at residues 124-155 (LAAQ…ARDA) and 156-186 (FWWT…WVGV). 2 disordered regions span residues 211–233 (RESH…SSQF) and 251–271 (AHLL…GVPT). Over residues 220–233 (PENQNRSTPSSSQF) the composition is skewed to polar residues. The region spanning 271 to 317 (TSSPGFRLLLRGGWEPGMGLGPRGEGRANPIPTILKRDQEGLGYRSP) is the G-patch domain. Residue Lys-306 forms a Glycyl lysine isopeptide (Lys-Gly) (interchain with G-Cter in SUMO2) linkage. Composition is skewed to basic and acidic residues over residues 330 to 340 (TRAVSGRERVP) and 348 to 357 (RENRRQEEKG). The interval 330–357 (TRAVSGRERVPRVATLSQRENRRQEEKG) is disordered.

The polypeptide is G patch domain and ankyrin repeat-containing protein 1 (Gpank1) (Mus musculus (Mouse)).